Reading from the N-terminus, the 515-residue chain is ADP,ATP carrier protein 1 (515 aa).

The next 12 membrane-spanning stretches (helical) occupy residues 24–44 (LKKV…YTVL), 62–82 (AIPF…MLIY), 93–113 (ALFY…PTVI), 124–144 (EFAD…VAIL), 149–169 (FAAF…LMFW), 184–204 (FYAL…RAIV), 226–246 (LLMA…WWIN), 286–306 (YILL…LIEV), 329–349 (FSFW…GNVI), 358–378 (ALVT…LVIF), 383–403 (SGLV…VGAI), and 465–485 (IGAM…IWLV).

The protein belongs to the ADP/ATP translocase tlc family.

It localises to the cell membrane. In Chlamydia pneumoniae (Chlamydophila pneumoniae), this protein is ADP,ATP carrier protein 1 (tlcA).